The following is a 3674-amino-acid chain: Spectrin beta chain, non-erythrocytic 5 (3674 aa).

Residues 1 to 37 (MAGQPHSPRELLGAAGHRSRRPSTELRVPPSPSLTMD) form a disordered region. Residues 1 to 279 (MAGQPHSPRE…IMTYVSLYYH (279 aa)) form an actin-binding region. 2 consecutive Calponin-homology (CH) domains span residues 54–159 (QMQE…LRFQ) and 177–282 (LSTK…HYCS). Spectrin repeat units follow at residues 307–416 (LQTQ…ALQQ), 428–529 (ARRF…RKQV), 642–742 (AEFL…ARLQ), 747–810 (VLQY…QGRA), 900–996 (GFCS…AVQL), 1103–1206 (ARQS…WLQE), 1209–1311 (ELQK…RQLL), and 1315–1417 (QLQE…ELQQ). Residues 1441-1469 (ALQSSETGQDLRSSQRLQKRHQQLESESR) are disordered. Polar residues predominate over residues 1442-1456 (LQSSETGQDLRSSQR). 19 Spectrin repeats span residues 1521–1624 (ELHQ…CLQQ), 1628–1727 (FQQY…RELE), 1731–1835 (RLHE…ALRD), 1842–1940 (VHRD…AQLE), 1944–2046 (LLAR…ERLQ), 2052–2146 (QLFL…HALH), 2150–2253 (LMAS…ELED), 2256–2361 (NFLE…QQLE), 2366–2467 (IHVL…EALD), 2471–2574 (QAQK…QLQQ), 2577–2680 (ELQL…RLEE), 2683–2784 (QLQA…AKLQ), 2791–2890 (RLRR…TALE), 2894–2997 (LLLK…LLQQ), 3000–3103 (EAQQ…GLQE), 3106–3209 (QLHQ…ENLA), 3213–3311 (EVHS…QWLA), 3318–3415 (AFLG…RWQR), and 3422–3488 (LQKL…EQEL). Residues 3533–3641 (TPTMEGSLEF…WWRALGSTAA (109 aa)) form the PH domain.

The protein belongs to the spectrin family. Probably associates with an alpha chain. Interacts (via C-terminus) with TRPC4. In terms of tissue distribution, expressed at very low levels in many tissues, with strongest expression in cerebellum, spinal cord, stomach, pituitary gland, liver, pancreas, salivary gland, kidney, bladder, and heart.

The protein localises to the cytoplasm. Its subcellular location is the cytoskeleton. The chain is Spectrin beta chain, non-erythrocytic 5 (SPTBN5) from Homo sapiens (Human).